The chain runs to 91 residues: Cell division protein FtsB (91 aa).

The Cytoplasmic portion of the chain corresponds to M1–F3. A helical transmembrane segment spans residues I4–I21. Topologically, residues S22–P91 are periplasmic. A coiled-coil region spans residues L26 to G74.

This sequence belongs to the FtsB family. Part of a complex composed of FtsB, FtsL and FtsQ.

It is found in the cell inner membrane. Functionally, essential cell division protein. May link together the upstream cell division proteins, which are predominantly cytoplasmic, with the downstream cell division proteins, which are predominantly periplasmic. The sequence is that of Cell division protein FtsB from Nitrosococcus oceani (strain ATCC 19707 / BCRC 17464 / JCM 30415 / NCIMB 11848 / C-107).